Reading from the N-terminus, the 493-residue chain is Desmethylyatein synthase (493 aa).

A helical transmembrane segment spans residues 1 to 21 (METFQCLTLFLLFISTVFILK). Cys434 contributes to the heme binding site.

It belongs to the cytochrome P450 family. Requires heme as cofactor.

It localises to the membrane. It carries out the reaction (-)-bursehernin + reduced [NADPH--hemoprotein reductase] + O2 = (-)-5'-demethylyatein + oxidized [NADPH--hemoprotein reductase] + H2O + H(+). Its pathway is aromatic compound metabolism; phenylpropanoid biosynthesis. Cytochrome P450 involved in the biosynthesis of etoposide, a chemotherapeutic compound of the topoisomerase inhibitor family. Catalyzes the conversion of bursehernin to demethylyatein. In Sinopodophyllum hexandrum (Himalayan may apple), this protein is Desmethylyatein synthase.